The sequence spans 180 residues: Ribosome maturation factor RimM (180 aa).

The region spanning 104 to 177 (EGEFHLLDLV…WLLLTPPPGL (74 aa)) is the PRC barrel domain.

It belongs to the RimM family. In terms of assembly, binds ribosomal protein uS19.

Its subcellular location is the cytoplasm. An accessory protein needed during the final step in the assembly of 30S ribosomal subunit, possibly for assembly of the head region. Essential for efficient processing of 16S rRNA. May be needed both before and after RbfA during the maturation of 16S rRNA. It has affinity for free ribosomal 30S subunits but not for 70S ribosomes. The sequence is that of Ribosome maturation factor RimM from Synechococcus sp. (strain CC9902).